The sequence spans 268 residues: Putative F-box protein At3g23420 (268 aa).

Residues 5 to 51 form the F-box domain; the sequence is PRDLSDLPRNMAEEVLSRVPMTSLRRLRFTCKKWNTLSRCRSFAKKH.

The protein is Putative F-box protein At3g23420 of Arabidopsis thaliana (Mouse-ear cress).